Here is a 660-residue protein sequence, read N- to C-terminus: DNA primase (660 aa).

A CHC2-type zinc finger spans residues 40–64; sequence CPFHKEKTPSFTVSPDKQFYYCFGC. Positions 94-115 are disordered; it reads GMEVPREQGRRDQKPRQPTDSP. The segment covering 97 to 110 has biased composition (basic and acidic residues); the sequence is VPREQGRRDQKPRQ. Residues 261–343 form the Toprim domain; it reads DEIIVVEGYM…GRRARFLFLP (83 aa). Mg(2+) is bound by residues Glu267, Asp311, and Asp313. 2 disordered regions span residues 425–449 and 476–519; these read DPQQ…DPGY and QAWK…APVE. Residues 428-442 are compositionally biased toward polar residues; the sequence is QVEQLAQQAPATSSM. The span at 488 to 498 shows a compositional bias: basic and acidic residues; the sequence is PWSDKPWDKNR.

This sequence belongs to the DnaG primase family. As to quaternary structure, monomer. Interacts with DnaB. Requires Zn(2+) as cofactor. Mg(2+) serves as cofactor.

The enzyme catalyses ssDNA + n NTP = ssDNA/pppN(pN)n-1 hybrid + (n-1) diphosphate.. Functionally, RNA polymerase that catalyzes the synthesis of short RNA molecules used as primers for DNA polymerase during DNA replication. The protein is DNA primase of Pseudomonas putida (strain ATCC 47054 / DSM 6125 / CFBP 8728 / NCIMB 11950 / KT2440).